A 248-amino-acid chain; its full sequence is 3-deoxy-manno-octulosonate cytidylyltransferase 2 (248 aa).

It belongs to the KdsB family.

The protein resides in the cytoplasm. It catalyses the reaction 3-deoxy-alpha-D-manno-oct-2-ulosonate + CTP = CMP-3-deoxy-beta-D-manno-octulosonate + diphosphate. It functions in the pathway nucleotide-sugar biosynthesis; CMP-3-deoxy-D-manno-octulosonate biosynthesis; CMP-3-deoxy-D-manno-octulosonate from 3-deoxy-D-manno-octulosonate and CTP: step 1/1. Its pathway is bacterial outer membrane biogenesis; lipopolysaccharide biosynthesis. Activates KDO (a required 8-carbon sugar) for incorporation into bacterial lipopolysaccharide in Gram-negative bacteria. This Hydrogenovibrio crunogenus (strain DSM 25203 / XCL-2) (Thiomicrospira crunogena) protein is 3-deoxy-manno-octulosonate cytidylyltransferase 2.